Reading from the N-terminus, the 214-residue chain is Large ribosomal subunit protein uL3 (214 aa).

The span at 130–151 (FSSNRASHGNSRSHNTPGSIGQ) shows a compositional bias: polar residues. The segment at 130-163 (FSSNRASHGNSRSHNTPGSIGQAQDPGRVFPGKR) is disordered. Gln153 is subject to N5-methylglutamine.

The protein belongs to the universal ribosomal protein uL3 family. In terms of assembly, part of the 50S ribosomal subunit. Forms a cluster with proteins L14 and L19. Post-translationally, methylated by PrmB.

Functionally, one of the primary rRNA binding proteins, it binds directly near the 3'-end of the 23S rRNA, where it nucleates assembly of the 50S subunit. This is Large ribosomal subunit protein uL3 from Chromobacterium violaceum (strain ATCC 12472 / DSM 30191 / JCM 1249 / CCUG 213 / NBRC 12614 / NCIMB 9131 / NCTC 9757 / MK).